The following is a 300-amino-acid chain: 4-diphosphocytidyl-2-C-methyl-D-erythritol kinase (300 aa).

The active site involves Lys17. 102-112 (PVAAGIGGGSA) is a binding site for ATP. Asp144 is a catalytic residue.

The protein belongs to the GHMP kinase family. IspE subfamily.

The catalysed reaction is 4-CDP-2-C-methyl-D-erythritol + ATP = 4-CDP-2-C-methyl-D-erythritol 2-phosphate + ADP + H(+). It participates in isoprenoid biosynthesis; isopentenyl diphosphate biosynthesis via DXP pathway; isopentenyl diphosphate from 1-deoxy-D-xylulose 5-phosphate: step 3/6. In terms of biological role, catalyzes the phosphorylation of the position 2 hydroxy group of 4-diphosphocytidyl-2C-methyl-D-erythritol. The chain is 4-diphosphocytidyl-2-C-methyl-D-erythritol kinase from Bradyrhizobium sp. (strain ORS 278).